The primary structure comprises 1906 residues: A disintegrin and metalloproteinase with thrombospondin motifs 20 (1906 aa).

A signal peptide spans 1-26 (MRVAKWLTGLLCPISLLLTGSWEVRF). Residues 27-249 (HPRQEALVKT…RSQLHSRNKR (223 aa)) constitute a propeptide that is removed on maturation. 2 N-linked (GlcNAc...) asparagine glycosylation sites follow: Asn-92 and Asn-221. Positions 201 to 222 (PCEVSENQMEKTALPSQSSRNT) are disordered. The region spanning 255–464 (RYVEVMVTAD…GHGECLLDKP (210 aa)) is the Peptidase M12B domain. 11 cysteine pairs are disulfide-bonded: Cys-330-Cys-383, Cys-359-Cys-365, Cys-377-Cys-459, Cys-415-Cys-443, Cys-486-Cys-508, Cys-497-Cys-518, Cys-503-Cys-537, Cys-531-Cys-542, Cys-565-Cys-602, Cys-569-Cys-607, and Cys-580-Cys-592. A Zn(2+)-binding site is contributed by His-399. Glu-400 is a catalytic residue. 2 residues coordinate Zn(2+): His-403 and His-409. Residues 465–552 (NGRTYDLSPQ…VTRDMETRPV (88 aa)) enclose the Disintegrin domain. The TSP type-1 1 domain occupies 553-608 (DGEWGPWGPYSSCSRTCGGGIKSTARLCDRPEPRNGGRYCVGRRMKFRSCNTDSCP). Asn-714, Asn-798, and Asn-805 each carry an N-linked (GlcNAc...) asparagine glycan. The interval 721 to 842 (AGVFNSAHYG…FNIPIEERSN (122 aa)) is spacer. 7 consecutive TSP type-1 domains span residues 843 to 901 (LFSW…MDCE), 906 to 962 (IIGK…GSCV), 962 to 1015 (VLTR…NCNE), 1017 to 1074 (PCPS…RACA), 1075 to 1131 (SWHV…APCL), 1148 to 1202 (RAAQ…LCFS), and 1203 to 1260 (PCGE…AACP). A glycan (N-linked (GlcNAc...) asparagine) is linked at Asn-1057. Residues 1265–1295 (RAPSSSEQPSHVPSRNVPLTHKPGENQDQGA) form a disordered region. The segment covering 1266-1277 (APSSSEQPSHVP) has biased composition (polar residues). 7 consecutive TSP type-1 domains span residues 1300-1351 (RGNQ…RHCG), 1354-1411 (PCPH…HACP), 1412-1465 (EDVS…KACR), 1468-1526 (RCPS…QDCM), 1527-1584 (RYQW…PHCK), 1585-1648 (YSVV…LRSC), and 1650-1706 (HVAT…NDCK). Residue Asn-1562 is glycosylated (N-linked (GlcNAc...) asparagine). A GON domain is found at 1707–1906 (LLTTCKELQV…MATGLSIQVL (200 aa)). N-linked (GlcNAc...) asparagine glycans are attached at residues Asn-1719, Asn-1759, and Asn-1777.

Requires Zn(2+) as cofactor. In terms of processing, the precursor is cleaved by a furin endopeptidase. Post-translationally, glycosylated. Can be O-fucosylated by POFUT2 on a serine or a threonine residue found within the consensus sequence C1-X(2)-(S/T)-C2-G of the TSP type-1 repeat domains where C1 and C2 are the first and second cysteine residue of the repeat, respectively. Fucosylated repeats can then be further glycosylated by the addition of a beta-1,3-glucose residue by the glucosyltransferase, B3GALTL. Fucosylation mediates the efficient secretion of ADAMTS family members. Can also be C-glycosylated with one or two mannose molecules on tryptophan residues within the consensus sequence W-X-X-W of the TPRs, and N-glycosylated. These other glycosylations can also facilitate secretion. In terms of tissue distribution, expressed at low level in testis and brain.

Its subcellular location is the secreted. The protein resides in the extracellular space. It localises to the extracellular matrix. May play a role in tissue-remodeling process occurring in both normal and pathological conditions. May have a protease-independent function in the transport from the endoplasmic reticulum to the Golgi apparatus of secretory cargos, mediated by the GON domain. The polypeptide is A disintegrin and metalloproteinase with thrombospondin motifs 20 (Adamts20) (Mus musculus (Mouse)).